The chain runs to 138 residues: Small ribosomal subunit protein uS11c (138 aa).

The disordered stretch occupies residues 1–24 (MTKPIPRIGSRRNGRIGSRKSGRR). The segment covering 9-24 (GSRRNGRIGSRKSGRR) has biased composition (basic residues).

This sequence belongs to the universal ribosomal protein uS11 family. As to quaternary structure, part of the 30S ribosomal subunit.

The protein resides in the plastid. It is found in the chloroplast. In Liriodendron tulipifera (Tuliptree), this protein is Small ribosomal subunit protein uS11c.